Reading from the N-terminus, the 282-residue chain is Pantothenate synthetase (282 aa).

30-37 is a binding site for ATP; the sequence is MGYLHEGH. His-37 serves as the catalytic Proton donor. Gln-61 contacts (R)-pantoate. Gln-61 is a binding site for beta-alanine. Residue 147 to 150 coordinates ATP; the sequence is GEKD. Gln-153 provides a ligand contact to (R)-pantoate. Residues Ile-176 and 184 to 187 each bind ATP; that span reads KSSR.

This sequence belongs to the pantothenate synthetase family. As to quaternary structure, homodimer.

The protein localises to the cytoplasm. It carries out the reaction (R)-pantoate + beta-alanine + ATP = (R)-pantothenate + AMP + diphosphate + H(+). It functions in the pathway cofactor biosynthesis; (R)-pantothenate biosynthesis; (R)-pantothenate from (R)-pantoate and beta-alanine: step 1/1. In terms of biological role, catalyzes the condensation of pantoate with beta-alanine in an ATP-dependent reaction via a pantoyl-adenylate intermediate. In Enterococcus faecalis (strain ATCC 700802 / V583), this protein is Pantothenate synthetase.